The sequence spans 191 residues: Leucyl/phenylalanyl-tRNA--protein transferase (191 aa).

It belongs to the L/F-transferase family.

The protein resides in the cytoplasm. The enzyme catalyses N-terminal L-lysyl-[protein] + L-leucyl-tRNA(Leu) = N-terminal L-leucyl-L-lysyl-[protein] + tRNA(Leu) + H(+). It carries out the reaction N-terminal L-arginyl-[protein] + L-leucyl-tRNA(Leu) = N-terminal L-leucyl-L-arginyl-[protein] + tRNA(Leu) + H(+). It catalyses the reaction L-phenylalanyl-tRNA(Phe) + an N-terminal L-alpha-aminoacyl-[protein] = an N-terminal L-phenylalanyl-L-alpha-aminoacyl-[protein] + tRNA(Phe). Its function is as follows. Functions in the N-end rule pathway of protein degradation where it conjugates Leu, Phe and, less efficiently, Met from aminoacyl-tRNAs to the N-termini of proteins containing an N-terminal arginine or lysine. This is Leucyl/phenylalanyl-tRNA--protein transferase from Nostoc sp. (strain PCC 7120 / SAG 25.82 / UTEX 2576).